Reading from the N-terminus, the 264-residue chain is MAGEQKPSSNLLEQFILLAKGTSGSALTALISQVLEAPGVYVFGELLELANVQELAEGANAAYLQLLNLFAYGTYPDYIANKESLPELSTAQQNKLKHLTIVSLASRMKCIPYSVLLKDLEMRNLRELEDLIIEAVYTDIIQGKLDQRNQLLEVDFCIGRDIRKKDINNIVKTLHEWCDGCEAVLLGIEQQVLRANQYKENHNRTQQQVEAEVTNIKKTLKATASSSAQEMEQQLAERECPPHAEQRQPTKKMSKVKGLVSSRH.

Residue Ala2 is modified to N-acetylalanine. A PCI domain is found at Ala2 to Gly159. Positions Ile188–Glu237 form a coiled coil. The span at Thr223 to Glu232 shows a compositional bias: polar residues. The tract at residues Thr223–His264 is disordered. The segment covering Leu235–Gln248 has biased composition (basic and acidic residues). Ser261 carries the phosphothreonine modification. Arg263 carries the post-translational modification Phosphoserine.

This sequence belongs to the CSN7/EIF3M family. CSN7 subfamily. As to quaternary structure, component of the CSN complex, composed of COPS1/GPS1, COPS2, COPS3, COPS4, COPS5, COPS6, COPS7 (COPS7A or COPS7B), COPS8 and COPS9 isoform 1. In the complex, it probably interacts directly with COPS1, COPS2, COPS4, COPS5, COPS6 and COPS8. Interacts with EIF3S6. (Microbial infection) Interacts with vaccinia virus protein C9L.

The protein resides in the cytoplasm. It localises to the nucleus. Functionally, component of the COP9 signalosome complex (CSN), a complex involved in various cellular and developmental processes. The CSN complex is an essential regulator of the ubiquitin (Ubl) conjugation pathway by mediating the deneddylation of the cullin subunits of SCF-type E3 ligase complexes, leading to decrease the Ubl ligase activity of SCF-type complexes such as SCF, CSA or DDB2. The complex is also involved in phosphorylation of p53/TP53, JUN, I-kappa-B-alpha/NFKBIA, ITPK1 and IRF8/ICSBP, possibly via its association with CK2 and PKD kinases. CSN-dependent phosphorylation of TP53 and JUN promotes and protects degradation by the Ubl system, respectively. In Homo sapiens (Human), this protein is COP9 signalosome complex subunit 7b (COPS7B).